A 204-amino-acid chain; its full sequence is Large ribosomal subunit protein eL15 (204 aa).

A disordered region spans residues 155-204 (VHKHREQRGLTSAGRKSRGLGKGWRFSATRGGSQAKNWKRKNTKVFHRKR). Basic residues predominate over residues 191 to 204 (NWKRKNTKVFHRKR).

The protein belongs to the eukaryotic ribosomal protein eL15 family.

The protein is Large ribosomal subunit protein eL15 (rpl-15) of Caenorhabditis elegans.